A 255-amino-acid polypeptide reads, in one-letter code: ATP synthase subunit a (255 aa).

The next 6 helical transmembrane spans lie at 28-48, 86-106, 125-145, 164-184, 203-223, and 224-244; these read VDSLIMSFSLGALFCYLFWLG, IAPLALTIFCWIFLMNLMDLV, ILPTVDLNVTFALSISVFFLI, FHPFGPWLLPFNLILNIIELI, LIFILISLLPWWIQWALGTPW, and AIFHILVIPLQAFIFMMLTVV.

Belongs to the ATPase A chain family. As to quaternary structure, F-type ATPases have 2 components, CF(1) - the catalytic core - and CF(0) - the membrane proton channel. CF(1) has five subunits: alpha(3), beta(3), gamma(1), delta(1), epsilon(1). CF(0) has three main subunits: a(1), b(2) and c(9-12). The alpha and beta chains form an alternating ring which encloses part of the gamma chain. CF(1) is attached to CF(0) by a central stalk formed by the gamma and epsilon chains, while a peripheral stalk is formed by the delta and b chains.

The protein localises to the cell inner membrane. Functionally, key component of the proton channel; it plays a direct role in the translocation of protons across the membrane. The protein is ATP synthase subunit a of Alkalilimnicola ehrlichii (strain ATCC BAA-1101 / DSM 17681 / MLHE-1).